A 22-amino-acid polypeptide reads, in one-letter code: VVSQYHELVVQARLSEQELEFR.

This sequence belongs to the MICOS complex subunit Mic60 family. In terms of assembly, component of the mitochondrial contact site and cristae organizing system (MICOS) complex, composed of at least MICOS10/MIC10, CHCHD3/MIC19, CHCHD6/MIC25, APOOL/MIC27, IMMT/MIC60, APOO/MIC23/MIC26 and MICOS13/MIC13. This complex was also known under the names MINOS or MitOS complex. The MICOS complex associates with mitochondrial outer membrane proteins SAMM50, MTX1 and MTX2 (together described as components of the mitochondrial outer membrane sorting assembly machinery (SAM) complex) and DNAJC11, mitochondrial inner membrane protein TMEM11 and with HSPA9. The MICOS and SAM complexes together with DNAJC11 are part of a large protein complex spanning both membranes termed the mitochondrial intermembrane space bridging (MIB) complex. Interacts with HSPA1A/HSPA1B and OPA1, preferentially with the soluble OPA1 form. Interacts with MICOS13/MIC13, MICOS10/MIC10, CHCHD3/MIC19, CHCHD6/MIC25, SAMM50 and TMEM11. Interacts with APOO/MIC23/MIC26 and APOOL/MIC27. Interacts with ARMC1. Interacts with ARMC12.

It is found in the mitochondrion inner membrane. The protein resides in the mitochondrion. Component of the MICOS complex, a large protein complex of the mitochondrial inner membrane that plays crucial roles in the maintenance of crista junctions, inner membrane architecture, and formation of contact sites to the outer membrane. Plays an important role in the maintenance of the MICOS complex stability and the mitochondrial cristae morphology. The polypeptide is MICOS complex subunit MIC60 (Mesocricetus auratus (Golden hamster)).